A 977-amino-acid polypeptide reads, in one-letter code: RNA-binding protein 15 (977 aa).

Basic and acidic residues-rich tracts occupy residues 1–10 (MRTAGRDPVP), 35–52 (RGDDLRRPATMKGKERSP), 59–72 (RGGEDSTSRGERSK), and 98–113 (LHLDKSSSRGGSREYD). The segment at 1-167 (MRTAGRDPVP…SSAPGGGDGA (167 aa)) is disordered. A Phosphoserine modification is found at Ser-109. Low complexity predominate over residues 119–130 (SSSRLHSYSSPS). Residues 135–150 (SGGGESRSSSRGGGGE) show a composition bias toward gly residues. The span at 151 to 160 (SRSSGAASSA) shows a compositional bias: low complexity. In terms of domain architecture, RRM 1 spans 170–252 (KTLKISELGS…RPLKIEAVYV (83 aa)). Residues Ser-179, Ser-208, and Ser-210 each carry the phosphoserine modification. Lys-246 is covalently cross-linked (Glycyl lysine isopeptide (Lys-Gly) (interchain with G-Cter in SUMO2)). A phosphoserine mark is found at Ser-253, Ser-257, and Ser-259. The interval 256 to 298 (RSRSPLDKDTYPPSASVVGASVGGHRHPPGGGGGQRSLSPGGA) is disordered. Phosphotyrosine is present on Tyr-266. 3 positions are modified to phosphoserine: Ser-292, Ser-294, and Ser-365. RRM domains are found at residues 374-451 (RTLF…YGKA) and 455-529 (TRLW…FADT). Residues Lys-406, Lys-420, and Lys-445 each participate in a glycyl lysine isopeptide (Lys-Gly) (interchain with G-Cter in SUMO2) cross-link. At Lys-450 the chain carries N6-acetyllysine. Basic and acidic residues-rich tracts occupy residues 555-581 (HRAPDPLRGARDRTPPLLYRDRDRDLY) and 613-661 (SLDR…ESDR). A disordered region spans residues 555–778 (HRAPDPLRGA…KQDGGTAPVA (224 aa)). The residue at position 568 (Thr-568) is a Phosphothreonine. Arg-578 bears the Asymmetric dimethylarginine; alternate; by PRMT1 mark. At Arg-578 the chain carries Omega-N-methylarginine; alternate; by PRMT1. Ser-622, Ser-656, Ser-670, Ser-674, Ser-700, and Ser-741 each carry phosphoserine. 2 stretches are compositionally biased toward basic and acidic residues: residues 673-728 (RSPE…AERD) and 741-750 (SPLKKEDRSD). Lys-744 participates in a covalent cross-link: Glycyl lysine isopeptide (Lys-Gly) (interchain with G-Cter in SUMO2). Over residues 752–771 (SAPSTSTASSKLKSPSQKQD) the composition is skewed to polar residues. A phosphoserine mark is found at Ser-765, Ser-767, and Ser-781. The SPOC domain maps to 777–956 (VASASPKLCL…YLVMIIVRGF (180 aa)). Positions 865 to 884 (GSSDSRSSSSSAASDTATST) are disordered. Over residues 866 to 884 (SSDSRSSSSSAASDTATST) the composition is skewed to low complexity. Phosphoserine is present on Ser-935.

It belongs to the RRM Spen family. Component of the WMM complex, a N6-methyltransferase complex composed of a catalytic subcomplex, named MAC, and of an associated subcomplex, named MACOM. The MAC subcomplex is composed of METTL3 and METTL14. The MACOM subcomplex is composed of WTAP, ZC3H13, CBLL1/HAKAI, VIRMA, and, in some cases of RBM15 (RBM15 or RBM15B). Also a component of a MACOM-like complex, named WTAP complex, composed of WTAP, ZC3H13, CBLL1, VIRMA, RBM15, BCLAF1 and THRAP3. Interacts with RBPJ. Interacts (via SPOC domain) with SETD1B. Interacts with NXF1, the interaction is required to promote mRNA export. Interacts with SF3B1. In terms of assembly, (Microbial infection) Interacts with Epstein-Barr virus BSFL2/BMLF1. Post-translationally, methylated at Arg-578 by PRMT1, leading to promote ubiquitination by CNOT4 and subsequent degradation by the proteasome. Ubiquitinated by CNOT4 following methylation at Arg-578 by PRMT1.

The protein resides in the nucleus speckle. It localises to the nucleus. The protein localises to the nucleoplasm. It is found in the nucleus envelope. Its subcellular location is the nucleus membrane. In terms of biological role, RNA-binding protein that acts as a key regulator of N6-methyladenosine (m6A) methylation of RNAs, thereby regulating different processes, such as hematopoietic cell homeostasis, alternative splicing of mRNAs and X chromosome inactivation mediated by Xist RNA. Associated component of the WMM complex, a complex that mediates N6-methyladenosine (m6A) methylation of RNAs, a modification that plays a role in the efficiency of mRNA splicing and RNA processing. Plays a key role in m6A methylation, possibly by binding target RNAs and recruiting the WMM complex. Involved in random X inactivation mediated by Xist RNA: acts by binding Xist RNA and recruiting the WMM complex, which mediates m6A methylation, leading to target YTHDC1 reader on Xist RNA and promoting transcription repression activity of Xist. Required for the development of multiple tissues, such as the maintenance of the homeostasis of long-term hematopoietic stem cells and for megakaryocyte (MK) and B-cell differentiation. Regulates megakaryocyte differentiation by regulating alternative splicing of genes important for megakaryocyte differentiation; probably regulates alternative splicing via m6A regulation. Required for placental vascular branching morphogenesis and embryonic development of the heart and spleen. Acts as a regulator of thrombopoietin response in hematopoietic stem cells by regulating alternative splicing of MPL. May also function as an mRNA export factor, stimulating export and expression of RTE-containing mRNAs which are present in many retrotransposons that require to be exported prior to splicing. High affinity binding of pre-mRNA to RBM15 may allow targeting of the mRNP to the export helicase DBP5 in a manner that is independent of splicing-mediated NXF1 deposition, resulting in export prior to splicing. May be implicated in HOX gene regulation. The polypeptide is RNA-binding protein 15 (Homo sapiens (Human)).